We begin with the raw amino-acid sequence, 125 residues long: Glycine cleavage system H protein (125 aa).

Residues 22–104 (SYVIGITDFA…YDTGWILKLE (83 aa)) form the Lipoyl-binding domain. At K63 the chain carries N6-lipoyllysine.

This sequence belongs to the GcvH family. The glycine cleavage system is composed of four proteins: P, T, L and H. (R)-lipoate is required as a cofactor.

In terms of biological role, the glycine cleavage system catalyzes the degradation of glycine. The H protein shuttles the methylamine group of glycine from the P protein to the T protein. Is also involved in protein lipoylation via its role as an octanoyl/lipoyl carrier protein intermediate. The polypeptide is Glycine cleavage system H protein (Listeria monocytogenes serotype 4a (strain HCC23)).